A 376-amino-acid chain; its full sequence is Carbohydrate sulfotransferase 14 (376 aa).

Residues 1–39 lie on the Cytoplasmic side of the membrane; that stretch reads MFPRPLTPLAAPNGAEPLGRALRRAPLGRARAGLGGPPL. Residues 40-60 form a helical; Signal-anchor for type II membrane protein membrane-spanning segment; sequence LLPSMLMFAVIVASSGLLLMI. Over 61–376 the chain is Lumenal; that stretch reads ERGILAEMKP…PNVTKEACQQ (316 aa). Asparagine 110 carries N-linked (GlcNAc...) asparagine glycosylation. 3'-phosphoadenylyl sulfate contacts are provided by residues 155–161 and 213–221; these read PKVACSN and REPLERLLS. Asparagine 368 carries an N-linked (GlcNAc...) asparagine glycan.

This sequence belongs to the sulfotransferase 2 family. In terms of tissue distribution, widely expressed. Expressed at high level in pituitary gland, placenta, uterus and thyroid.

The protein resides in the golgi apparatus membrane. It carries out the reaction dermatan + n 3'-phosphoadenylyl sulfate = dermatan 4'-sulfate + n adenosine 3',5'-bisphosphate + n H(+). Functionally, catalyzes the transfer of sulfate to position 4 of the N-acetylgalactosamine (GalNAc) residue of dermatan sulfate. Plays a pivotal role in the formation of 4-0-sulfated IdoA blocks in dermatan sulfate. Transfers sulfate to the C-4 hydroxyl of beta1,4-linked GalNAc that is substituted with an alpha-linked iduronic acid (IdoUA) at the C-3 hydroxyl. Transfers sulfate more efficiently to GalNAc residues in -IdoUA-GalNAc-IdoUA- than in -GlcUA-GalNAc-GlcUA-sequences. Has preference for partially desulfated dermatan sulfate. Addition of sulfate to GalNAc may occur immediately after epimerization of GlcUA to IdoUA. Appears to have an important role in the formation of the cerebellar neural network during postnatal brain development. This chain is Carbohydrate sulfotransferase 14 (CHST14), found in Homo sapiens (Human).